The chain runs to 183 residues: Glutathione-regulated potassium-efflux system ancillary protein KefG (183 aa).

It belongs to the NAD(P)H dehydrogenase (quinone) family. KefG subfamily. In terms of assembly, interacts with KefB.

The protein resides in the cell inner membrane. It catalyses the reaction a quinone + NADH + H(+) = a quinol + NAD(+). The catalysed reaction is a quinone + NADPH + H(+) = a quinol + NADP(+). In terms of biological role, regulatory subunit of a potassium efflux system that confers protection against electrophiles. Required for full activity of KefB. The polypeptide is Glutathione-regulated potassium-efflux system ancillary protein KefG (Shigella flexneri serotype 5b (strain 8401)).